The sequence spans 113 residues: Large ribosomal subunit protein bL17 (113 aa).

The protein belongs to the bacterial ribosomal protein bL17 family. As to quaternary structure, part of the 50S ribosomal subunit. Contacts protein L32.

The sequence is that of Large ribosomal subunit protein bL17 from Clostridium botulinum (strain Loch Maree / Type A3).